A 338-amino-acid polypeptide reads, in one-letter code: Lumican (338 aa).

Positions 1–18 (MSLSAFTLFLALIGGTSG) are cleaved as a signal peptide. Glutamine 19 carries the pyrrolidone carboxylic acid modification. Residues tyrosine 20, tyrosine 21, tyrosine 23, and tyrosine 30 each carry the sulfotyrosine modification. The region spanning 28-66 (SIYGQSSPNCAPECNCPESYPSAMYCDELKLKSVPMVPP) is the LRRNT domain. LRR repeat units follow at residues 67 to 88 (GIKYLYLRNNQIDHIDEKAFEN), 91 to 114 (DLQWLILDHNLLENSKIKGRVFSK), 117 to 137 (QLKKLHINHNNLTESVGPLPK), 138 to 159 (SLEDLQLTHNKITKLGSFEGLV), 160 to 181 (NLTFIHLQHNRLKEDAVSAAFK), 185 to 205 (SLEYLDLSFNQIARLPSGLPV), 206 to 227 (SLLTLYLDNNKISNIPDEYFKR), 230 to 253 (ALQYLRLSHNELADSGIPGNSFNV), 255 to 276 (SLVELDLSYNKLKNIPTVNENL), and 277 to 296 (ENYYLEVNQLEKFDIKSFCK). N-linked (GlcNAc...) (keratan sulfate) asparagine glycosylation is present at asparagine 88. An N-linked (GlcNAc...) (keratan sulfate) asparagine glycan is attached at asparagine 127. N-linked (GlcNAc...) (keratan sulfate) asparagine glycosylation occurs at asparagine 160. An N-linked (GlcNAc...) (keratan sulfate) asparagine glycan is attached at asparagine 252. Cysteines 295 and 328 form a disulfide. At serine 304 the chain carries Phosphoserine. The stretch at 305 to 326 (KIKHLRLDGNRISETSLPPDMY) is one LRR 11 repeat.

The protein belongs to the small leucine-rich proteoglycan (SLRP) family. SLRP class II subfamily. As to quaternary structure, binds to laminin. In terms of processing, sulfated on tyrosine residue(s). Post-translationally, contains keratan sulfate. In terms of tissue distribution, cornea and other tissues.

It is found in the secreted. The protein resides in the extracellular space. It localises to the extracellular matrix. The protein is Lumican (LUM) of Homo sapiens (Human).